The sequence spans 282 residues: Glutamate--LysW ligase ArgX (282 aa).

Residues Lys87, Lys127, 131 to 137 (GSWGRLV), and 167 to 178 (QEYIQYKGRDIR) each bind ATP. One can recognise an ATP-grasp domain in the interval 91–277 (YSKLYREGIP…VAQKLVEYIK (187 aa)). Arg192 contributes to the substrate binding site. Asn202 contacts ATP. 203–204 (VA) contributes to the substrate binding site. Residues Asp237, Glu250, and Asn252 each coordinate Mg(2+). Substrate is bound at residue 256–260 (EFKGF). The short motif at 259-260 (GF) is the GF motif that is essential for ArgX substrate specificity element.

The protein belongs to the RimK family. LysX subfamily. As to quaternary structure, homotetramer. Interacts with LysW. Mg(2+) is required as a cofactor.

It carries out the reaction [amino-group carrier protein]-C-terminal-L-glutamate + L-glutamate + ATP = [amino-group carrier protein]-C-terminal-gamma-(L-glutamyl)-L-glutamate + ADP + phosphate + H(+). It participates in amino-acid biosynthesis; L-arginine biosynthesis. Catalyzes the ATP-dependent formation of a covalent bond between the amino group of glutamate and the gamma-carboxyl group of the C-terminal glutamate residue in LysW. This is Glutamate--LysW ligase ArgX from Sulfurisphaera tokodaii (strain DSM 16993 / JCM 10545 / NBRC 100140 / 7) (Sulfolobus tokodaii).